Reading from the N-terminus, the 317-residue chain is Ribose-phosphate pyrophosphokinase (317 aa).

ATP is bound by residues 43–45 (DGE) and 102–103 (RQ). Residues Lys-106 and Arg-110 each contribute to the ADP site. His-136 is a Mg(2+) binding site. Residues Gln-141 and 149–150 (DH) contribute to the ADP site. Asp-175 is a Mg(2+) binding site. Residue Lys-198 is part of the active site. Residues Arg-200, Asp-224, and 228 to 232 (DTAGT) contribute to the D-ribose 5-phosphate site. 311–313 (SVS) lines the ADP pocket.

It belongs to the ribose-phosphate pyrophosphokinase family. Class I subfamily. As to quaternary structure, homohexamer; trimer of dimers. Mg(2+) serves as cofactor.

The protein localises to the cytoplasm. It catalyses the reaction D-ribose 5-phosphate + ATP = 5-phospho-alpha-D-ribose 1-diphosphate + AMP + H(+). The protein operates within metabolic intermediate biosynthesis; 5-phospho-alpha-D-ribose 1-diphosphate biosynthesis; 5-phospho-alpha-D-ribose 1-diphosphate from D-ribose 5-phosphate (route I): step 1/1. Its activity is regulated as follows. Activated by inorganic phosphate, and to a lesser extent by sulfate ions. In addition to form a complex with ATP, Mg(2+) also acts as a cofactor. Strongly inhibited by ADP through competitive binding at the activation site and at a specific allosteric site. Less strongly inhibited by alpha,beta-methylene ATP (mADP), AMP, GDP, GMP and UTP. Its function is as follows. Involved in the biosynthesis of the central metabolite phospho-alpha-D-ribosyl-1-pyrophosphate (PRPP) via the transfer of pyrophosphoryl group from ATP to 1-hydroxyl of ribose-5-phosphate (Rib-5-P). This is Ribose-phosphate pyrophosphokinase from Bacillus subtilis (strain 168).